The sequence spans 401 residues: 1-deoxy-D-xylulose 5-phosphate reductoisomerase (401 aa).

Positions 11, 12, 13, 14, 38, 39, and 125 each coordinate NADPH. Residue Lys126 participates in 1-deoxy-D-xylulose 5-phosphate binding. NADPH is bound at residue Glu127. Residue Asp151 participates in Mn(2+) binding. Residues Ser152, Glu153, Ser179, and His202 each contribute to the 1-deoxy-D-xylulose 5-phosphate site. Glu153 provides a ligand contact to Mn(2+). Position 208 (Gly208) interacts with NADPH. The 1-deoxy-D-xylulose 5-phosphate site is built by Ser215, Asn220, Lys221, and Glu224. Glu224 is a binding site for Mn(2+).

The protein belongs to the DXR family. Mg(2+) is required as a cofactor. Mn(2+) serves as cofactor.

It catalyses the reaction 2-C-methyl-D-erythritol 4-phosphate + NADP(+) = 1-deoxy-D-xylulose 5-phosphate + NADPH + H(+). Its pathway is isoprenoid biosynthesis; isopentenyl diphosphate biosynthesis via DXP pathway; isopentenyl diphosphate from 1-deoxy-D-xylulose 5-phosphate: step 1/6. Functionally, catalyzes the NADPH-dependent rearrangement and reduction of 1-deoxy-D-xylulose-5-phosphate (DXP) to 2-C-methyl-D-erythritol 4-phosphate (MEP). This chain is 1-deoxy-D-xylulose 5-phosphate reductoisomerase, found in Paraburkholderia phymatum (strain DSM 17167 / CIP 108236 / LMG 21445 / STM815) (Burkholderia phymatum).